The following is a 1390-amino-acid chain: DNA-directed RNA polymerase subunit beta (1390 aa).

This sequence belongs to the RNA polymerase beta chain family. In terms of assembly, the RNAP catalytic core consists of 2 alpha, 1 beta, 1 beta' and 1 omega subunit. When a sigma factor is associated with the core the holoenzyme is formed, which can initiate transcription.

The enzyme catalyses RNA(n) + a ribonucleoside 5'-triphosphate = RNA(n+1) + diphosphate. DNA-dependent RNA polymerase catalyzes the transcription of DNA into RNA using the four ribonucleoside triphosphates as substrates. The sequence is that of DNA-directed RNA polymerase subunit beta from Rhodopseudomonas palustris (strain HaA2).